A 1234-amino-acid chain; its full sequence is ATP-dependent helicase/nuclease subunit A (1234 aa).

One can recognise a UvrD-like helicase ATP-binding domain in the interval 9–482 (STWTDDQWEA…IDLNKNFRSR (474 aa)). Position 30 to 37 (30 to 37 (AAAGSGKT)) interacts with ATP. In terms of domain architecture, UvrD-like helicase C-terminal spans 509–800 (QAELKLGASY…RMMTIHSSKG (292 aa)).

It belongs to the helicase family. AddA subfamily. As to quaternary structure, heterodimer of AddA and AddB/RexB. The cofactor is Mg(2+).

The catalysed reaction is Couples ATP hydrolysis with the unwinding of duplex DNA by translocating in the 3'-5' direction.. The enzyme catalyses ATP + H2O = ADP + phosphate + H(+). The heterodimer acts as both an ATP-dependent DNA helicase and an ATP-dependent, dual-direction single-stranded exonuclease. Recognizes the chi site generating a DNA molecule suitable for the initiation of homologous recombination. The AddA nuclease domain is required for chi fragment generation; this subunit has the helicase and 3' -&gt; 5' nuclease activities. The protein is ATP-dependent helicase/nuclease subunit A of Bacillus pumilus (strain SAFR-032).